The following is a 743-amino-acid chain: Ribosome biogenesis protein BOP1 homolog (743 aa).

WD repeat units follow at residues Gly365–Arg404, Lys575–Lys615, Ser617–Lys655, Ser659–Lys701, and Lys712–Glu743.

The protein belongs to the WD repeat BOP1/ERB1 family.

The protein localises to the nucleus. The protein resides in the nucleolus. It localises to the nucleoplasm. In terms of biological role, required for maturation of ribosomal RNAs and formation of the large ribosomal subunit. The protein is Ribosome biogenesis protein BOP1 homolog of Leishmania braziliensis.